Consider the following 159-residue polypeptide: uncharacterized protein (159 aa).

This is an uncharacterized protein from Bacillus subtilis (strain 168).